We begin with the raw amino-acid sequence, 201 residues long: ATP-dependent Clp protease proteolytic subunit 2 (201 aa).

The active-site Nucleophile is S98. H123 is an active-site residue.

It belongs to the peptidase S14 family. Fourteen ClpP subunits assemble into 2 heptameric rings which stack back to back to give a disk-like structure with a central cavity, resembling the structure of eukaryotic proteasomes.

Its subcellular location is the cytoplasm. The enzyme catalyses Hydrolysis of proteins to small peptides in the presence of ATP and magnesium. alpha-casein is the usual test substrate. In the absence of ATP, only oligopeptides shorter than five residues are hydrolyzed (such as succinyl-Leu-Tyr-|-NHMec, and Leu-Tyr-Leu-|-Tyr-Trp, in which cleavage of the -Tyr-|-Leu- and -Tyr-|-Trp bonds also occurs).. Functionally, cleaves peptides in various proteins in a process that requires ATP hydrolysis. Has a chymotrypsin-like activity. Plays a major role in the degradation of misfolded proteins. In Pseudomonas aeruginosa (strain ATCC 15692 / DSM 22644 / CIP 104116 / JCM 14847 / LMG 12228 / 1C / PRS 101 / PAO1), this protein is ATP-dependent Clp protease proteolytic subunit 2.